Reading from the N-terminus, the 3563-residue chain is D-lysergyl-peptide-synthetase subunit 1 (3563 aa).

Residues S307 to I706 are adenylation (A) domain 1. Residues E844–T921 form the Carrier 1 domain. An O-(pantetheine 4'-phosphoryl)serine modification is found at S881. The segment at E963 to N1354 is condensation (C) domain 1. Residues Q1397–R1804 form an adenylation (A) domain 2 region. A Carrier 2 domain is found at P1944–Q2020. The residue at position 1981 (S1981) is an O-(pantetheine 4'-phosphoryl)serine. A condensation (C) domain 2 region spans residues E2067–M2486. An adenylation (A) domain 3 region spans residues Q2511–R2909. Positions P3025–A3104 constitute a Carrier 3 domain. S3064 carries the O-(pantetheine 4'-phosphoryl)serine modification. The cyclization (Cyc) domain stretch occupies residues L3166 to D3451.

This sequence belongs to the NRP synthetase family.

The protein operates within alkaloid biosynthesis; ergot alkaloid biosynthesis. Its function is as follows. D-lysergyl-peptide-synthetase subunit 1; part of the gene cluster that mediates the biosynthesis of fungal ergot alkaloid. DmaW catalyzes the first step of ergot alkaloid biosynthesis by condensing dimethylallyl diphosphate (DMAP) and tryptophan to form 4-dimethylallyl-L-tryptophan. The second step is catalyzed by the methyltransferase easF that methylates 4-dimethylallyl-L-tryptophan in the presence of S-adenosyl-L-methionine, resulting in the formation of 4-dimethylallyl-L-abrine. The catalase easC and the FAD-dependent oxidoreductase easE then transform 4-dimethylallyl-L-abrine to chanoclavine-I which is further oxidized by easD in the presence of NAD(+), resulting in the formation of chanoclavine-I aldehyde. Agroclavine dehydrogenase easG then mediates the conversion of chanoclavine-I aldehyde to agroclavine via a non-enzymatic adduct reaction: the substrate is an iminium intermediate that is formed spontaneously from chanoclavine-I aldehyde in the presence of glutathione. The presence of easA is not required to complete this reaction. Further conversion of agroclavine to paspalic acid is a two-step process involving oxidation of agroclavine to elymoclavine and of elymoclavine to paspalic acid, the second step being performed by the elymoclavine oxidase cloA. Paspalic acid is then further converted to D-lysergic acid. Ergopeptines are assembled from D-lysergic acid and three different amino acids by the D-lysergyl-peptide-synthetases composed each of a monomudular and a trimodular nonribosomal peptide synthetase subunit. LpsB and lpsC encode the monomodular subunits responsible for D-lysergic acid activation and incorporation into the ergopeptine backbone. LpsA1 and A2 subunits encode the trimodular nonribosomal peptide synthetase assembling the tripeptide portion of ergopeptines. LpsA1 is responsible for formation of the major ergopeptine, ergotamine, and lpsA2 for alpha-ergocryptine, the minor ergopeptine of the total alkaloid mixture elaborated by C.purpurea. D-lysergyl-tripeptides are assembled by the nonribosomal peptide synthetases and released as N-(D-lysergyl-aminoacyl)-lactams. Cyclolization of the D-lysergyl-tripeptides is performed by the Fe(2+)/2-ketoglutarate-dependent dioxygenase easH which introduces a hydroxyl group into N-(D-lysergyl-aminoacyl)-lactam at alpha-C of the aminoacyl residue followed by spontaneous condensation with the terminal lactam carbonyl group. This is D-lysergyl-peptide-synthetase subunit 1 from Claviceps purpurea (Ergot fungus).